The chain runs to 82 residues: Small ribosomal subunit protein uS17 (82 aa).

It belongs to the universal ribosomal protein uS17 family. In terms of assembly, part of the 30S ribosomal subunit.

One of the primary rRNA binding proteins, it binds specifically to the 5'-end of 16S ribosomal RNA. The sequence is that of Small ribosomal subunit protein uS17 from Shewanella halifaxensis (strain HAW-EB4).